We begin with the raw amino-acid sequence, 100 residues long: NADH-quinone oxidoreductase subunit K (100 aa).

The next 3 membrane-spanning stretches (helical) occupy residues 4-24 (MQHG…GLLI), 28-48 (LIFM…AWVV), and 60-80 (IFYL…LALL).

The protein belongs to the complex I subunit 4L family. As to quaternary structure, NDH-1 is composed of 13 different subunits. Subunits NuoA, H, J, K, L, M, N constitute the membrane sector of the complex.

The protein localises to the cell membrane. The enzyme catalyses a quinone + NADH + 5 H(+)(in) = a quinol + NAD(+) + 4 H(+)(out). In terms of biological role, NDH-1 shuttles electrons from NADH, via FMN and iron-sulfur (Fe-S) centers, to quinones in the respiratory chain. The immediate electron acceptor for the enzyme in this species is believed to be ubiquinone. Couples the redox reaction to proton translocation (for every two electrons transferred, four hydrogen ions are translocated across the cytoplasmic membrane), and thus conserves the redox energy in a proton gradient. In Hamiltonella defensa subsp. Acyrthosiphon pisum (strain 5AT), this protein is NADH-quinone oxidoreductase subunit K.